The following is a 110-amino-acid chain: Iron-sulfur cluster assembly protein CyaY (110 aa).

The protein belongs to the frataxin family.

Functionally, involved in iron-sulfur (Fe-S) cluster assembly. May act as a regulator of Fe-S biogenesis. This chain is Iron-sulfur cluster assembly protein CyaY, found in Paracidovorax citrulli (strain AAC00-1) (Acidovorax citrulli).